The following is a 601-amino-acid chain: Probable N-acetylgalactosaminyltransferase 7 (601 aa).

The Cytoplasmic portion of the chain corresponds to 1 to 20 (MIIARKKLQLQRLWRQRGCR). The chain crosses the membrane as a helical; Signal-anchor for type II membrane protein span at residues 21-38 (VATYICLGVLVLFGFVYN). Residues 39–601 (SKGNSMSSIK…FVWKEFYQSS (563 aa)) are Lumenal-facing. Residues 61–108 (DLTNKELPGGPDPNTIFRGSELGNYEPKEPEIPSNQPGEHGKPVPVTD) are disordered. N-linked (GlcNAc...) asparagine glycosylation occurs at Asn135. Cystine bridges form between Cys146/Cys382, Cys373/Cys452, Cys490/Cys506, Cys529/Cys542, and Cys568/Cys583. The segment at 155–265 (LPTVSVVVVF…TNWLPPLLAP (111 aa)) is catalytic subdomain A. Residues Asp196 and Arg226 each coordinate substrate. 2 residues coordinate Mn(2+): Asp249 and His251. Positions 328-390 (PFRSPTHAGG…PCSHVGHVYR (63 aa)) are catalytic subdomain B. Trp359 is a binding site for substrate. Position 387 (His387) interacts with Mn(2+). Arg390 and Tyr395 together coordinate substrate. The region spanning 477–595 (DVWGEARNPA…DNERQKFVWK (119 aa)) is the Ricin B-type lectin domain.

It belongs to the glycosyltransferase 2 family. GalNAc-T subfamily. It depends on Mn(2+) as a cofactor.

The protein localises to the golgi apparatus membrane. It functions in the pathway protein modification; protein glycosylation. In terms of biological role, probable glycopeptide transferase involved in O-linked oligosaccharide biosynthesis. Glycopeptide transferases catalyze the transfer of an N-acetyl-D-galactosamine residue to an already glycosylated peptide. In contrast to other members of the family, it does not act as a peptide transferase that transfers GalNAc onto serine or threonine residue on peptides that have been tested. Some peptide transferase activity is however not excluded, considering that its appropriate peptide substrate may remain unidentified. The polypeptide is Probable N-acetylgalactosaminyltransferase 7 (gly-7) (Caenorhabditis elegans).